Reading from the N-terminus, the 389-residue chain is Metal tolerance protein 2 (389 aa).

Over 1–81 (MGFRLAHLAA…GGEASERIFR (81 aa)) the chain is Cytoplasmic. A helical transmembrane segment spans residues 82–102 (LGLAADVVLTVGKAVTGYLSG). At 103 to 104 (ST) the chain is on the vacuolar side. Residues 105 to 125 (AIAADAAHSLSDIVLSGVALL) form a helical membrane-spanning segment. Over 126–148 (SYKAAKAPRDKEHPYGHGKFESL) the chain is Cytoplasmic. The helical transmembrane segment at 149-169 (GALGISSMLLVTAGGIAWHAF) threads the bilayer. The Vacuolar portion of the chain corresponds to 170-206 (DVLQGVMSSAPDIIGNVSHAHHSHGSSGHHHGIDLEH). Residues 207-227 (PILALSVTAFAISVKEGLYWI) traverse the membrane as a helical segment. Topologically, residues 228 to 250 (TKRAGEKEGSGLMKANAWHHRSD) are cytoplasmic. A helical transmembrane segment spans residues 251–271 (AISSVVALLGVGGSILGVPYL). At 272 to 275 (DPLA) the chain is on the vacuolar side. The helical transmembrane segment at 276–296 (GLVVSGMILKAGVHTGYESVL) threads the bilayer. Over 297–389 (ELVDAAVDPS…SLQPLNQNAL (93 aa)) the chain is Cytoplasmic.

The protein belongs to the cation diffusion facilitator (CDF) transporter (TC 2.A.4) family. SLC30A subfamily.

The protein localises to the vacuole membrane. Involved in sequestration of excess metal in the cytoplasm into vacuoles to maintain metal homeostasis. The sequence is that of Metal tolerance protein 2 (MTP2) from Oryza sativa subsp. japonica (Rice).